The sequence spans 1228 residues: MKALDEPPYLTVGTDVSAKYRGAFCEAKIKTAKRLVKVKVTFRHDSSTVEVQDDHIKGPLKVGAIVEVKNLDGAYQEAVINKLTDASWYTVVFDDGDEKTLRRSSLCLKGERHFAESETLDQLPLTNPEHFGTPVIGKKTNRGRRSNHIPEEESSSSSSDDDEDDRKQTDELLGKVVCVDYISLDKKKALWFPALVVCPDCSDEIAVKKDNILVRSFKDGKFTSVPRKDVHEITSDTAPKPDAVLKQAFDQALEFHKSRTIPANWKTELKEDSSSSEAEEEEEEEDDEKEKEDNSSEEEEEIEPFPEERENFLQQLYKFMEDRGTPINKRPVLGYRNLNLFKLFRLVHKLGGFDNIESGAVWKQVYQDLGIPVLNSAAGYNVKCAYKKYLYGFEEYCRSANIDFQMALPEKVLNKPCKDCENKEIKVKEESDAEIKEVNVEDSKNMIPKEETPAEDESERKENIKPSLGSKKGLLECIPAQSDQEKEANITKLEEKESLEDKDGATARAEEALSTEVDAEEEQARSGYDEWIKADKIVRPADKNVPKIKHRKKIKNKLDKEKDRDEKYSPKNCKLRRLSKSPFQSNPSPEMVSKLDLADAKNSDTGHIKSIEITSILNGLQASESSAEDSEQEEERCAQDPESSSKDESKVEHSAHSRSELISKEELSSPSLLEENKVHPDLVIAKTVSKSPERLRKDVEAISEDTDFEEEDEITKKRKDVKKDTTDKALKPQTKTWGKDRYCIQTNCLQSGSPGKKEDRTKSKEPLCTGNSSNSSSDEDEEEKSKAKMTPTKKYNGLEEKRKSLRTTSFYSGFSEVAEKRIKLLNNSDERLQNNRAKDRKDVWSSIQGQWPKKTLKELFSDSDTEAAASPPHAAPDEGTVEESLQTVAEEESCSPNMELEKPLPTSVDSKPVEEKPLEVSDRKTEFPSSGSNSVLNTPPTTPESPSSVTVTETSQQQSSVTVSVPLPPNQEEVRSIKSETDSTIEVDSVVGELQDLQSEGNSSPAGFNASVSSSSSNQPEPEHPEKACTGQKRVKDTQGVGSSSKKQKRSHKATVVNNKKKGKGTNSSDSEDLSAGESVTKTQAIKSVPTGMKTHNSKSPARIQSPGKCGKNGDKDPDLKEPSNRLPKVYKWSFQMSDLENMTSAERISILQEKLQEIRKHYLSLKSEVASIDRRRKRLKKKERESAATSSSSSSPSSSSITAAVMLTLAEPSMSSASQNGMSVECR.

Disordered regions lie at residues 123-167 (LPLT…DDRK) and 266-307 (KTEL…PFPE). Phosphoserine occurs at positions 276, 295, and 296. The span at 277-305 (EAEEEEEEEDDEKEKEDNSSEEEEEIEPF) shows a compositional bias: acidic residues. One can recognise an ARID domain in the interval 306-398 (PEERENFLQQ…YLYGFEEYCR (93 aa)). Glycyl lysine isopeptide (Lys-Gly) (interchain with G-Cter in SUMO2) cross-links involve residues lysine 428 and lysine 461. Residues 437–464 (EVNVEDSKNMIPKEETPAEDESERKENI) are compositionally biased toward basic and acidic residues. Disordered regions lie at residues 437–466 (EVNV…NIKP), 479–525 (PAQS…EQAR), 539–606 (RPAD…SDTG), 620–802 (LQAS…EEKR), 825–1129 (LNNS…RLPK), and 1168–1204 (SEVA…SITA). Serine 482 is modified (phosphoserine). Basic and acidic residues predominate over residues 483-511 (DQEKEANITKLEEKESLEDKDGATARAEE). The span at 546–555 (PKIKHRKKIK) shows a compositional bias: basic residues. Residues 556 to 569 (NKLDKEKDRDEKYS) show a composition bias toward basic and acidic residues. Phosphoserine occurs at positions 579, 581, and 588. Over residues 596 to 606 (DLADAKNSDTG) the composition is skewed to basic and acidic residues. Position 630 is a phosphoserine (serine 630). 2 stretches are compositionally biased toward basic and acidic residues: residues 635 to 667 (ERCA…KEEL) and 691 to 700 (SPERLRKDVE). Lysine 664 participates in a covalent cross-link: Glycyl lysine isopeptide (Lys-Gly) (interchain with G-Cter in SUMO2). 2 positions are modified to phosphoserine: serine 691 and serine 703. The span at 701–713 (AISEDTDFEEEDE) shows a compositional bias: acidic residues. Residue threonine 706 is modified to Phosphothreonine. The segment covering 721–730 (VKKDTTDKAL) has biased composition (basic and acidic residues). The segment covering 744–753 (IQTNCLQSGS) has biased composition (polar residues). 3 stretches are compositionally biased toward basic and acidic residues: residues 755-765 (GKKEDRTKSKE), 825-843 (LNNS…RKDV), and 911-926 (KPVE…RKTE). Polar residues predominate over residues 927–937 (FPSSGSNSVLN). Serine 930 is modified (phosphoserine). Threonine 942 is subject to Phosphothreonine. Residues 944–965 (ESPSSVTVTETSQQQSSVTVSV) show a composition bias toward low complexity. Serine 945 bears the Phosphoserine mark. Basic and acidic residues predominate over residues 972 to 981 (EEVRSIKSET). Positions 1003-1017 (SSPAGFNASVSSSSS) are enriched in low complexity. Basic residues predominate over residues 1046–1064 (KKQKRSHKATVVNNKKKGK). Threonine 1066 carries the phosphothreonine modification. 4 positions are modified to phosphoserine: serine 1068, serine 1069, serine 1071, and serine 1075. The span at 1112-1124 (KNGDKDPDLKEPS) shows a compositional bias: basic and acidic residues. Residues 1141–1186 (ENMTSAERISILQEKLQEIRKHYLSLKSEVASIDRRRKRLKKKERE) adopt a coiled-coil conformation. Residues 1188-1204 (AATSSSSSSPSSSSITA) show a composition bias toward low complexity.

As to quaternary structure, component of a Sin3A corepressor complex consisting of SIN3A, SAP130, SUDS3/SAP45, SAP180, HDAC1 and HDAC2. Interacts with ARID4A. Interacts with AR.

Its subcellular location is the nucleus. Its function is as follows. Acts as a transcriptional repressor. May function in the assembly and/or enzymatic activity of the Sin3A corepressor complex or in mediating interactions between the complex and other regulatory complexes. Plays a role in the regulation of epigenetic modifications at the PWS/AS imprinting center near the SNRPN promoter, where it might function as part of a complex with RB1 and ARID4A. Involved in spermatogenesis, together with ARID4A, where it functions as a transcriptional coactivator for AR (androgen receptor) and enhances expression of genes required for sperm maturation. Regulates expression of the tight junction protein CLDN3 in the testis, which is important for integrity of the blood-testis barrier. Plays a role in myeloid homeostasis where it regulates the histone methylation state of bone marrow cells and expression of various genes involved in hematopoiesis. May function as a leukemia suppressor. The protein is AT-rich interactive domain-containing protein 4B (Arid4b) of Rattus norvegicus (Rat).